Consider the following 141-residue polypeptide: Large ribosomal subunit protein bL17 (141 aa).

Belongs to the bacterial ribosomal protein bL17 family. In terms of assembly, part of the 50S ribosomal subunit. Contacts protein L32.

The protein is Large ribosomal subunit protein bL17 of Bartonella bacilliformis (strain ATCC 35685 / KC583 / Herrer 020/F12,63).